A 201-amino-acid chain; its full sequence is Protein lin-7 homolog B (201 aa).

The Kinase interacting site signature appears at 1 to 13 (MAALVEPLGLERE). The L27 domain occupies 10–65 (LEREVSRAVELLERLQRSGELPPQKLQALQRVLQSRFCSAIREVYEQLYDTLDITG). The 83-residue stretch at 93-175 (VVELPKTDEG…SVKLVVRYTP (83 aa)) folds into the PDZ domain.

This sequence belongs to the lin-7 family. As to quaternary structure, forms a complex with CASK and CASKIN1. Component of the brain-specific heterotrimeric complex (LIN-10-LIN-2-LIN-7 complex) composed of at least APBA1, CASK, and LIN7, which associates with the motor protein KIF17 to transport vesicles along microtubules. Forms a heterotrimeric complex composed of MMP5, LIN7B and PATJ; the N-terminal L27 domain of PALS1 interacts with the L27 domain of PATJ and the C-terminal L27 domain of PALS1 interacts with the L27 domain of LIN7B. Forms a heterotrimeric complex with DLG1 and CASK via their L27 domains. Interacts with DLG4 and GRIN2B as well as CDH1 and CTNNB1, the channels KCNJ12/Kir2.2, KCNJ4/Kir2.3 and probably KCNJ2/Kir2.1 and SLC6A12/BGT-1 via its PDZ domain. The association of LIN7A with cadherin and beta-catenin is calcium-dependent, occurs at synaptic junctions and requires the actin cytoskeleton. Interacts with EGFR, ERBB2, ERBB3 and ERBB4 with both PDZ and KID domains. Interacts with ASIC3. Interacts with TOPK. Interacts with RTKN. Associates with KIF17 via APBA1. Interacts with APBA1. Interacts with MPP7. Interacts with DLG2. Interacts with DLG3.

The protein localises to the cell membrane. Its subcellular location is the basolateral cell membrane. It is found in the cell junction. The protein resides in the postsynaptic density membrane. It localises to the tight junction. Its function is as follows. Plays a role in establishing and maintaining the asymmetric distribution of channels and receptors at the plasma membrane of polarized cells. Forms membrane-associated multiprotein complexes that may regulate delivery and recycling of proteins to the correct membrane domains. The tripartite complex composed of LIN7 (LIN7A, LIN7B or LIN7C), CASK and APBA1 associates with the motor protein KIF17 to transport vesicles containing N-methyl-D-aspartate (NMDA) receptor subunit NR2B along microtubules. This complex may have the potential to couple synaptic vesicle exocytosis to cell adhesion in brain. Ensures the proper localization of GRIN2B (subunit 2B of the NMDA receptor) to neuronal postsynaptic density and may function in localizing synaptic vesicles at synapses where it is recruited by beta-catenin and cadherin. Required to localize Kir2 channels, GABA transporter (SLC6A12) and EGFR/ERBB1, ERBB2, ERBB3 and ERBB4 to the basolateral membrane of epithelial cells. May increase the amplitude of ASIC3 acid-evoked currents by stabilizing the channel at the cell surface. The sequence is that of Protein lin-7 homolog B (LIN7B) from Bos taurus (Bovine).